We begin with the raw amino-acid sequence, 337 residues long: Membrane-spanning 4-domains subfamily A member 18 (337 aa).

Residues 101-121 (LGTTDLQTQPGGPQNPPTCAP) are disordered. A run of 4 helical transmembrane segments spans residues 155–175 (LGAI…NPSL), 183–203 (AISG…SLSV), 220–240 (MNVV…VDLI), and 252–272 (GGLL…SHFG).

It belongs to the MS4A family.

It localises to the membrane. The sequence is that of Membrane-spanning 4-domains subfamily A member 18 (MS4A18) from Bos taurus (Bovine).